The following is a 436-amino-acid chain: ATP-dependent RNA helicase RhlB (436 aa).

The Q motif signature appears at 9–37 (QKFADFPLHKEVHQALNEAGFEFCTPIQA). One can recognise a Helicase ATP-binding domain in the interval 40–219 (LPILLEKKDI…YDHMNEPEKV (180 aa)). 53-60 (AQTGTGKT) provides a ligand contact to ATP. Positions 165-168 (DEAD) match the DEAD box motif. The 148-residue stretch at 243 to 390 (KMPLLLSLLE…VTSYDSDALL (148 aa)) folds into the Helicase C-terminal domain. The disordered stretch occupies residues 392-436 (DIPPPVRIHRKPSTHTRNTRDRSSGRPQGGQRNGPRRHDKTRRHS). The span at 425-436 (GPRRHDKTRRHS) shows a compositional bias: basic residues.

It belongs to the DEAD box helicase family. RhlB subfamily. Component of the RNA degradosome, which is a multiprotein complex involved in RNA processing and mRNA degradation.

It is found in the cytoplasm. It carries out the reaction ATP + H2O = ADP + phosphate + H(+). DEAD-box RNA helicase involved in RNA degradation. Has RNA-dependent ATPase activity and unwinds double-stranded RNA. The protein is ATP-dependent RNA helicase RhlB of Shewanella pealeana (strain ATCC 700345 / ANG-SQ1).